The sequence spans 365 residues: tRNA N6-adenosine threonylcarbamoyltransferase (365 aa).

Residues His119 and His123 each contribute to the Fe cation site. Substrate is bound by residues 141 to 145 (LVSGG), Asp174, Gly187, and Asn288. Fe cation is bound at residue Asp316.

Belongs to the KAE1 / TsaD family. It depends on Fe(2+) as a cofactor.

It is found in the cytoplasm. It carries out the reaction L-threonylcarbamoyladenylate + adenosine(37) in tRNA = N(6)-L-threonylcarbamoyladenosine(37) in tRNA + AMP + H(+). In terms of biological role, required for the formation of a threonylcarbamoyl group on adenosine at position 37 (t(6)A37) in tRNAs that read codons beginning with adenine. Is involved in the transfer of the threonylcarbamoyl moiety of threonylcarbamoyl-AMP (TC-AMP) to the N6 group of A37, together with TsaE and TsaB. TsaD likely plays a direct catalytic role in this reaction. The protein is tRNA N6-adenosine threonylcarbamoyltransferase of Rhizobium leguminosarum bv. trifolii (strain WSM2304).